The primary structure comprises 732 residues: Aldehyde oxidoreductase molybdenum-binding subunit PaoC (732 aa).

Residues 241–242 (GF), 468–470 (IGT), 511–512 (GA), 615–621 (RILNPKT), Gln-625, and 688–691 (KGVG) contribute to the Mo-molybdopterin cytosine dinucleotide site. Catalysis depends on Glu-692, which acts as the Proton acceptor.

This sequence belongs to the xanthine dehydrogenase family. Heterotrimer composed of PaoA, PaoB and PaoC. Mo-molybdopterin cytosine dinucleotide is required as a cofactor.

It localises to the periplasm. It catalyses the reaction an aldehyde + A + H2O = a carboxylate + AH2 + H(+). In terms of biological role, oxidizes aldehydes to the corresponding carboxylic acids with a preference for aromatic aldehydes. It might play a role in the detoxification of aldehydes to avoid cell damage. The protein is Aldehyde oxidoreductase molybdenum-binding subunit PaoC of Escherichia coli O157:H7.